Consider the following 183-residue polypeptide: Archaemetzincin (183 aa).

A Zn(2+)-binding site is contributed by H131. The active-site Proton acceptor is E132. Zn(2+) is bound by residues H135, H141, C142, C147, and C166.

Belongs to the peptidase M54 family. Monomer. Requires Zn(2+) as cofactor.

Probable zinc metalloprotease whose natural substrate is unknown. This chain is Archaemetzincin, found in Saccharolobus solfataricus (strain ATCC 35092 / DSM 1617 / JCM 11322 / P2) (Sulfolobus solfataricus).